We begin with the raw amino-acid sequence, 127 residues long: Large ribosomal subunit protein bL12 (127 aa).

It belongs to the bacterial ribosomal protein bL12 family. As to quaternary structure, homodimer. Part of the ribosomal stalk of the 50S ribosomal subunit. Forms a multimeric L10(L12)X complex, where L10 forms an elongated spine to which 2 to 4 L12 dimers bind in a sequential fashion. Binds GTP-bound translation factors.

Its function is as follows. Forms part of the ribosomal stalk which helps the ribosome interact with GTP-bound translation factors. Is thus essential for accurate translation. The chain is Large ribosomal subunit protein bL12 from Streptomyces griseus subsp. griseus (strain JCM 4626 / CBS 651.72 / NBRC 13350 / KCC S-0626 / ISP 5235).